The primary structure comprises 214 residues: Guanylate kinase (214 aa).

Residues 6–192 form the Guanylate kinase-like domain; the sequence is GTLYIISAPS…ALEDLKAIFR (187 aa). 13-20 is a binding site for ATP; the sequence is APSGAGKT.

The protein belongs to the guanylate kinase family.

The protein resides in the cytoplasm. The enzyme catalyses GMP + ATP = GDP + ADP. In terms of biological role, essential for recycling GMP and indirectly, cGMP. This is Guanylate kinase from Pseudomonas syringae pv. syringae (strain B728a).